An 842-amino-acid polypeptide reads, in one-letter code: Translation initiation factor IF-2 (842 aa).

Disordered stretches follow at residues glutamate 42–serine 91 and leucine 139–proline 253. 2 stretches are compositionally biased toward basic and acidic residues: residues isoleucine 176 to histidine 190 and serine 199 to arginine 214. Residues proline 340–lysine 509 form the tr-type G domain. The interval glycine 349–threonine 356 is G1. Glycine 349 to threonine 356 serves as a coordination point for GTP. The G2 stretch occupies residues glycine 374–histidine 378. Residues aspartate 395–glycine 398 are G3. Residues aspartate 395–histidine 399 and asparagine 449–aspartate 452 each bind GTP. The interval asparagine 449 to aspartate 452 is G4. Residues serine 485–lysine 487 form a G5 region.

It belongs to the TRAFAC class translation factor GTPase superfamily. Classic translation factor GTPase family. IF-2 subfamily.

It is found in the cytoplasm. In terms of biological role, one of the essential components for the initiation of protein synthesis. Protects formylmethionyl-tRNA from spontaneous hydrolysis and promotes its binding to the 30S ribosomal subunits. Also involved in the hydrolysis of GTP during the formation of the 70S ribosomal complex. The polypeptide is Translation initiation factor IF-2 (Bartonella tribocorum (strain CIP 105476 / IBS 506)).